Consider the following 206-residue polypeptide: GTP cyclohydrolase 1 (206 aa).

Cys-95, His-98, and Cys-166 together coordinate Zn(2+).

Belongs to the GTP cyclohydrolase I family. As to quaternary structure, toroid-shaped homodecamer, composed of two pentamers of five dimers.

The catalysed reaction is GTP + H2O = 7,8-dihydroneopterin 3'-triphosphate + formate + H(+). The protein operates within cofactor biosynthesis; 7,8-dihydroneopterin triphosphate biosynthesis; 7,8-dihydroneopterin triphosphate from GTP: step 1/1. In Bartonella bacilliformis (strain ATCC 35685 / KC583 / Herrer 020/F12,63), this protein is GTP cyclohydrolase 1.